We begin with the raw amino-acid sequence, 712 residues long: Frizzled-6 (712 aa).

Positions 1–18 (MEMFTFLLTCVFLPFVRG) are cleaved as a signal peptide. Residues 19–132 (HSLFTCEPIT…CDRLQYCDET (114 aa)) form the FZ domain. The Extracellular segment spans residues 19–201 (HSLFTCEPIT…SDELEFAKSF (183 aa)). 5 cysteine pairs are disulfide-bonded: cysteine 24/cysteine 85, cysteine 32/cysteine 78, cysteine 69/cysteine 106, cysteine 95/cysteine 129, and cysteine 99/cysteine 123. A glycan (N-linked (GlcNAc...) asparagine) is linked at asparagine 38. Residues 202–222 (IGIVSIFCLCATLFTFLTFLI) form a helical membrane-spanning segment. The Cytoplasmic segment spans residues 223 to 233 (DVKRFRYPERP). The helical transmembrane segment at 234–254 (IIYYSVCYSIVSLMYFIGFLL) threads the bilayer. Topologically, residues 255–284 (GDRTACNKADEKLELGDTVVLGSQNKACTV) are extracellular. Residues 285–305 (LFMFLYFFTMAGTVWWVILTI) form a helical membrane-spanning segment. Residues 306–324 (TWFLAAGRKWSCEAIEQKA) are Cytoplasmic-facing. A helical membrane pass occupies residues 325-345 (VWFHAVAWGIPGFLTVMLLAM). Residues 346 to 370 (NKVEGDNISGVCFVGLYDLDASRYF) are Extracellular-facing. N-linked (GlcNAc...) asparagine glycosylation occurs at asparagine 352. Residues 371–391 (VLLPLCLCVFVGLSLLLAGII) form a helical membrane-spanning segment. The Cytoplasmic portion of the chain corresponds to 392–416 (SLNHVRQVIQHDGRNQEKLKKFMIR). Residues 417 to 437 (IGVFSGLYLVPLVTLLGCYVY) form a helical membrane-spanning segment. Residues 438–473 (EQVNRITWEITWVSDHCRQYHIPCPYQAKTETRPEL) lie on the Extracellular side of the membrane. Residues 474–494 (ALFMIKYLMTLIVGISAVFWV) form a helical membrane-spanning segment. Residues 495–712 (GSKKTCTEWA…EHGTGSHSDT (218 aa)) lie on the Cytoplasmic side of the membrane. The Lys-Thr-X-X-X-Trp motif, mediates interaction with the PDZ domain of Dvl family members signature appears at 498–503 (KTCTEW). The segment at 588–712 (EIQTSPETSV…EHGTGSHSDT (125 aa)) is disordered. 2 stretches are compositionally biased toward basic and acidic residues: residues 628–637 (LCEEQADRKG) and 652–664 (TRSE…KSDV). Polar residues predominate over residues 668 to 693 (GPMQSSSLQVPGSSEPGSLKGSTSLL). A compositionally biased stretch (basic and acidic residues) spans 700-712 (GRKEHGTGSHSDT).

This sequence belongs to the G-protein coupled receptor Fz/Smo family. As to quaternary structure, interacts with LMBR1L. Ubiquitinated by ZNRF3, leading to its degradation by the proteasome.

The protein localises to the membrane. Its subcellular location is the cell membrane. The protein resides in the cell surface. It is found in the apical cell membrane. It localises to the cytoplasmic vesicle membrane. The protein localises to the endoplasmic reticulum membrane. Functionally, receptor for Wnt proteins. Most of frizzled receptors are coupled to the beta-catenin canonical signaling pathway, which leads to the activation of disheveled proteins, inhibition of GSK-3 kinase, nuclear accumulation of beta-catenin and activation of Wnt target genes. A second signaling pathway involving PKC and calcium fluxes has been seen for some family members, but it is not yet clear if it represents a distinct pathway or if it can be integrated in the canonical pathway, as PKC seems to be required for Wnt-mediated inactivation of GSK-3 kinase. Both pathways seem to involve interactions with G-proteins. Activation by Wnt5A stimulates PKC activity via a G-protein-dependent mechanism. Involved in transduction and intercellular transmission of polarity information during tissue morphogenesis and/or in differentiated tissues. Together with FZD3, is involved in the neural tube closure and plays a role in the regulation of the establishment of planar cell polarity (PCP), particularly in the orientation of asymmetric bundles of stereocilia on the apical faces of a subset of auditory and vestibular sensory cells located in the inner ear. This is Frizzled-6 (FZD6) from Canis lupus familiaris (Dog).